The sequence spans 119 residues: Phosphoribosyl-AMP cyclohydrolase (119 aa).

Mg(2+) is bound at residue aspartate 78. Cysteine 79 is a Zn(2+) binding site. Residues aspartate 80 and aspartate 82 each coordinate Mg(2+). 2 residues coordinate Zn(2+): cysteine 95 and cysteine 102.

It belongs to the PRA-CH family. In terms of assembly, homodimer. Requires Mg(2+) as cofactor. The cofactor is Zn(2+).

The protein localises to the cytoplasm. It carries out the reaction 1-(5-phospho-beta-D-ribosyl)-5'-AMP + H2O = 1-(5-phospho-beta-D-ribosyl)-5-[(5-phospho-beta-D-ribosylamino)methylideneamino]imidazole-4-carboxamide. It functions in the pathway amino-acid biosynthesis; L-histidine biosynthesis; L-histidine from 5-phospho-alpha-D-ribose 1-diphosphate: step 3/9. Its function is as follows. Catalyzes the hydrolysis of the adenine ring of phosphoribosyl-AMP. The polypeptide is Phosphoribosyl-AMP cyclohydrolase (Jannaschia sp. (strain CCS1)).